Consider the following 308-residue polypeptide: Cell division protein FtsQ (308 aa).

A disordered region spans residues 1–28; that stretch reads MQSLSFPPNRRTPRLAPPRRETGRRDPA. Over 1-46 the chain is Cytoplasmic; it reads MQSLSFPPNRRTPRLAPPRRETGRRDPAPSRWAYRAQRLWLTPMFR. Positions 18-28 are enriched in basic and acidic residues; sequence PRRETGRRDPA. A helical membrane pass occupies residues 47-67; sequence TALRVGLPIVGVLLVVALIFA. Over 68 to 308 the chain is Periplasmic; the sequence is SADRRAAMAG…RGIDTSGSDL (241 aa). Residues 92–160 enclose the POTRA domain; that stretch reads FMVTLLSVDG…GLLEVRVTER (69 aa).

The protein belongs to the FtsQ/DivIB family. FtsQ subfamily.

It is found in the cell inner membrane. In terms of biological role, essential cell division protein. The sequence is that of Cell division protein FtsQ from Cereibacter sphaeroides (strain ATCC 17023 / DSM 158 / JCM 6121 / CCUG 31486 / LMG 2827 / NBRC 12203 / NCIMB 8253 / ATH 2.4.1.) (Rhodobacter sphaeroides).